A 490-amino-acid chain; its full sequence is Cytochrome P450 2C2 (490 aa).

A heme-binding site is contributed by C435.

This sequence belongs to the cytochrome P450 family. It depends on heme as a cofactor.

It is found in the endoplasmic reticulum membrane. It localises to the microsome membrane. The enzyme catalyses an organic molecule + reduced [NADPH--hemoprotein reductase] + O2 = an alcohol + oxidized [NADPH--hemoprotein reductase] + H2O + H(+). Functionally, cytochromes P450 are a group of heme-thiolate monooxygenases. In liver microsomes, this enzyme is involved in an NADPH-dependent electron transport pathway. It oxidizes a variety of structurally unrelated compounds, including steroids, fatty acids, and xenobiotics. In the epoxidation of arachidonic acid it generates only 14,15- and 11,12-cis-epoxyeicosatrienoic acids. This is Cytochrome P450 2C2 (CYP2C2) from Oryctolagus cuniculus (Rabbit).